We begin with the raw amino-acid sequence, 220 residues long: Iron-sulfur cluster repair protein YtfE (220 aa).

This sequence belongs to the RIC family. YtfE subfamily. Homodimer.

The protein resides in the cytoplasm. Its function is as follows. Di-iron-containing protein involved in the repair of iron-sulfur clusters damaged by oxidative and nitrosative stress conditions. In Escherichia coli O6:K15:H31 (strain 536 / UPEC), this protein is Iron-sulfur cluster repair protein YtfE.